We begin with the raw amino-acid sequence, 1035 residues long: Cell-division control histidine kinase PdhS (1035 aa).

The segment at 1-613 (MSGSYPFIDI…HADGSEEPVD (613 aa)) is important for polar localization. The segment at 500–533 (QGLANTRAESETPVSETSSIEPVEPTPPVKTRSE) is disordered. The segment at 614-1035 (AHLNAIAWRG…VFPPTRVLAD (422 aa)) is interaction with DivK. Residues 659 to 730 (HVEELKTILD…YLHGLSGNGV (72 aa)) form the PAS domain. The 230-residue stretch at 802–1031 (RISHEIRTPL…VVEIVFPPTR (230 aa)) folds into the Histidine kinase domain. Histidine 805 bears the Phosphohistidine; by autocatalysis mark.

Interacts with DivK.

The protein resides in the cytoplasm. The catalysed reaction is ATP + protein L-histidine = ADP + protein N-phospho-L-histidine.. Its function is as follows. Functions as a polar differentiation marker. Essential protein that, by localizing in the old pole of dividing cells, controls cell division and maturation, probably through control of DivK phosphorylation status and cellular distribution, which in turn regulates CtrA, a transcriptional regulator of the minB operon. The asymmetrical localization of this protein is probably required for cells to enter a new division cycle. The chain is Cell-division control histidine kinase PdhS (pdhS) from Brucella canis (strain ATCC 23365 / NCTC 10854 / RM-666).